We begin with the raw amino-acid sequence, 129 residues long: Large ribosomal subunit protein bL12 (129 aa).

The protein belongs to the bacterial ribosomal protein bL12 family. In terms of assembly, homodimer. Part of the ribosomal stalk of the 50S ribosomal subunit. Forms a multimeric L10(L12)X complex, where L10 forms an elongated spine to which 2 to 4 L12 dimers bind in a sequential fashion. Binds GTP-bound translation factors.

In terms of biological role, forms part of the ribosomal stalk which helps the ribosome interact with GTP-bound translation factors. Is thus essential for accurate translation. The sequence is that of Large ribosomal subunit protein bL12 from Pelotomaculum thermopropionicum (strain DSM 13744 / JCM 10971 / SI).